A 517-amino-acid polypeptide reads, in one-letter code: MRAIAIVLARSSSKRIKNKNIIDFFNKPMLAYPIEVALNSKLFEKVFISSDSMEYVNLAKNYGASFLNLRPKILADDRATTLEVMAYHMEELELKDEDIACCLYGASALLQEKHLKNAFETLNKNQNTDYVFTCSPFSASPYRSFSLENGVQMAFKEHSNTRTQDLKTLYHDAGLLYMGKAQAFKEMRPIFSQNSIALELSPLEVQDIAHFRRFRISQAQIQPFEKRMPVKILCDCFLTSGLGHVRRCEKILSFIEKLGVEASLYLHKQNNISAFLEGVGGNDFLITDSYCLNSKDFYLLKEKAKSLMVIEDTEHAKGFYPKNTKILNFTLNALKHYHHLSKDYQYYLGVGFYPVDARFIYDRPINTENKEVLITLGGSEQKTLKEIVKILENKNVNLHIISPYTPKNPPKNTHYYSPLNPLEFSSLMKSCACAISAAGQTLYELALSQTPSLILPIASNQIIQSKEFESLGIFKQTSLKTLAKDFENLQIQKNQAWAKNLVFGDKLEGALREFLEI.

The pseudaminic acid cytidylyltransferase stretch occupies residues 1–208 (MRAIAIVLAR…ELSPLEVQDI (208 aa)). A UDP-2,4-diacetamido-2,4,6-trideoxy-beta-L-altropyranose hydrolase region spans residues 209–517 (AHFRRFRISQ…EGALREFLEI (309 aa)). His-244 serves as the catalytic Proton acceptor; for UDP-2,4-diacetamido-2,4,6-trideoxy-beta-L-altropyranose hydrolase activity.

The protein in the N-terminal section; belongs to the CMP-NeuNAc synthase family. It in the C-terminal section; belongs to the PseG family. In terms of assembly, monomer. It depends on Mg(2+) as a cofactor.

It carries out the reaction UDP-2,4-diacetamido-2,4,6-trideoxy-beta-L-altrose + H2O = 2,4-diacetamido-2,4,6-trideoxy-beta-L-altrose + UDP + H(+). The enzyme catalyses pseudaminate + CTP = CMP-pseudaminate + diphosphate. In terms of biological role, catalyzes the fourth and sixth steps in the biosynthesis of pseudaminic acid, a sialic-acid-like sugar that is used to modify flagellin. The C-terminus mediates the fourth step of the pathway and catalyzes the removal of UDP from C-1 of UDP-2,4-diacetamido-2,4,6-trideoxy-beta-L-altropyranose forming 2,4-diacetamido-2,4,6-trideoxy-beta-L-altropyranose. The N-terminal part mediates the last step of the pathway by mediating activation of pseudaminic acid with CMP by forming CMP-pseudaminic acid. This chain is Pseudaminic acid cytidylyltransferase and UDP-2,4-diacetamido-2,4,6-trideoxy-beta-L-altropyranose hydrolase, found in Helicobacter pylori (strain ATCC 700392 / 26695) (Campylobacter pylori).